A 126-amino-acid chain; its full sequence is Protein K7 (126 aa).

Residues 24–44 (LPLHLWILCSLLAFLPLLVFI) form a helical membrane-spanning segment.

Interacts with host CAMLG; this interaction allows efficient apoptosis inhibition. Additionally, interacts with vGPCR/ORF74 and induces its proteasomeal degradation.

The protein localises to the host membrane. The protein resides in the host mitochondrion. In terms of biological role, plays a role in the inhibition of host apoptosis to allow completion of the viral lytic replication and may thus favor the maintenance of persistent infection in infected host. The protein is Protein K7 (K7) of Homo sapiens (Human).